Consider the following 269-residue polypeptide: tRNA (guanine-N(1)-)-methyltransferase (269 aa).

S-adenosyl-L-methionine-binding positions include Gly-115 and 139-144; that span reads LGDYVL.

The protein belongs to the RNA methyltransferase TrmD family. As to quaternary structure, homodimer.

It is found in the cytoplasm. The catalysed reaction is guanosine(37) in tRNA + S-adenosyl-L-methionine = N(1)-methylguanosine(37) in tRNA + S-adenosyl-L-homocysteine + H(+). Specifically methylates guanosine-37 in various tRNAs. The polypeptide is tRNA (guanine-N(1)-)-methyltransferase (Pseudarthrobacter chlorophenolicus (strain ATCC 700700 / DSM 12829 / CIP 107037 / JCM 12360 / KCTC 9906 / NCIMB 13794 / A6) (Arthrobacter chlorophenolicus)).